The sequence spans 203 residues: Small ribosomal subunit protein uS7 (203 aa).

The tract at residues 1–21 (MSSEAPEPDAPASTDDERVSA) is disordered.

The protein belongs to the universal ribosomal protein uS7 family. As to quaternary structure, part of the 30S ribosomal subunit.

Functionally, one of the primary rRNA binding proteins, it binds directly to 16S rRNA where it nucleates assembly of the head domain of the 30S subunit. Is located at the subunit interface close to the decoding center. This Natronomonas pharaonis (strain ATCC 35678 / DSM 2160 / CIP 103997 / JCM 8858 / NBRC 14720 / NCIMB 2260 / Gabara) (Halobacterium pharaonis) protein is Small ribosomal subunit protein uS7.